A 900-amino-acid chain; its full sequence is Phosphoenolpyruvate carboxylase (900 aa).

Catalysis depends on residues histidine 140 and lysine 568.

The protein belongs to the PEPCase type 1 family. Requires Mg(2+) as cofactor.

It carries out the reaction oxaloacetate + phosphate = phosphoenolpyruvate + hydrogencarbonate. Its function is as follows. Forms oxaloacetate, a four-carbon dicarboxylic acid source for the tricarboxylic acid cycle. This chain is Phosphoenolpyruvate carboxylase, found in Neisseria meningitidis serogroup C / serotype 2a (strain ATCC 700532 / DSM 15464 / FAM18).